Consider the following 408-residue polypeptide: S-adenosylmethionine sensor upstream of mTORC1 (408 aa).

A compositionally biased stretch (low complexity) spans M1–A16. The tract at residues M1 to K37 is disordered. Positions S17–P27 are enriched in pro residues. The span at E28–K37 shows a compositional bias: basic and acidic residues. S-adenosyl-L-methionine is bound by residues R97, G175, D193, D205, F206, and S247.

Belongs to the BMT2/SAMTOR family. In terms of assembly, interacts with the GATOR1 complex; interaction is disrupted when SAMTOR binds S-adenosyl-L-methionine. Interacts with the KICSTOR complex; interaction is disrupted when SAMTOR binds S-adenosyl-L-methionine.

Its function is as follows. S-adenosyl-L-methionine-binding protein that acts as an inhibitor of mTORC1 signaling via interaction with the GATOR1 and KICSTOR complexes. Acts as a sensor of S-adenosyl-L-methionine to signal methionine sufficiency to mTORC1: in presence of methionine, binds S-adenosyl-L-methionine, leading to disrupt interaction with the GATOR1 and KICSTOR complexes and promote mTORC1 signaling. Upon methionine starvation, S-adenosyl-L-methionine levels are reduced, thereby promoting the association with GATOR1 and KICSTOR, leading to inhibit mTORC1 signaling. Probably also acts as a S-adenosyl-L-methionine-dependent methyltransferase. In Gallus gallus (Chicken), this protein is S-adenosylmethionine sensor upstream of mTORC1.